The primary structure comprises 487 residues: b(0,+)-type amino acid transporter 1 (487 aa).

Residues 1-15 (MGDTGLRKRREDEKS) show a composition bias toward basic and acidic residues. A disordered region spans residues 1-22 (MGDTGLRKRREDEKSIQSQEPK). The Cytoplasmic portion of the chain corresponds to 1 to 31 (MGDTGLRKRREDEKSIQSQEPKTTSLQKELG). Ser18 carries the phosphoserine modification. The helical transmembrane segment at 32-55 (LISGISIIVGTIIGSGIFVSPKSV) threads the bilayer. 43 to 47 (IIGSG) lines the L-arginine pocket. The Extracellular portion of the chain corresponds to 56–62 (LSNTEAV). A helical transmembrane segment spans residues 63 to 84 (GPCLIIWAACGVLATLGALCFA). The Cytoplasmic segment spans residues 85 to 110 (ELGTMITKSGGEYPYLMEAYGPIPAY). The chain crosses the membrane as a helical span at residues 111-137 (LFSWASLIVIKPTSFAIICLSFSEYVC). At 138 to 147 (APFYVGCKPP) the chain is on the extracellular side. 2 consecutive transmembrane segments (helical) span residues 148–169 (QIVV…NSLS) and 170–193 (VRLG…IIII). The Extracellular portion of the chain corresponds to 194–217 (SGLVLLAQGNTKNFDNSFEGAQLS). The helical transmembrane segment at 218 to 238 (VGAISLAFYNGLWAYDGWNQL) threads the bilayer. Position 233 (Asp233) interacts with L-arginine. The Cytoplasmic segment spans residues 239 to 251 (NYITEELRNPYRN). Residues 252–274 (LPLAIIIGIPLVTACYILMNVSY) form a helical membrane-spanning segment. The Extracellular portion of the chain corresponds to 275 to 302 (FTVMTATELLQSQAVAVTFGDRVLYPAS). Residues 303 to 325 (WIVPLFVAFSTIGAANGTCFTAG) traverse the membrane as a helical segment. The Cytoplasmic portion of the chain corresponds to 326–351 (RLIYVAGREGHMLKVLSYISVRRLTP). Transmembrane regions (helical) follow at residues 352–370 (APAI…IPGD) and 371–391 (INSL…LTIL). Over 392–410 (GLIVMRFTRKELERPIKVP) the chain is Cytoplasmic. Residues 411 to 431 (VVIPVLMTLISVFLVLAPIIS) form a helical membrane-spanning segment. The Extracellular portion of the chain corresponds to 432-434 (KPT). The chain crosses the membrane as a helical span at residues 435-450 (WEYLYCVLFILSGLLF). The Cytoplasmic portion of the chain corresponds to 451–487 (YFLFVHYKFGWAQKISKPITMHLQMLMEVVPPEEDPE).

The protein belongs to the amino acid-polyamine-organocation (APC) superfamily. As to quaternary structure, disulfide-linked heterodimer composed of the catalytic light chain subunit SLC7A9 and the heavy chain subunit SLC3A1. The heterodimer is the minimal functional unit. Assembles in heterotetramers (dimers of heterodimers) and higher order oligomers; the oligomerization is mediated by SLC3A1 likely to prevent degradation and facilitate heteromer trafficking to the plasma membrane. Interacts with CAV1. Expressed in the brush border membrane in the kidney (at protein level). Kidney, small intestine, liver and placenta.

It is found in the apical cell membrane. Its subcellular location is the cell membrane. The catalysed reaction is L-leucine(out) + L-arginine(in) = L-leucine(in) + L-arginine(out). The enzyme catalyses L-histidine(out) + L-arginine(in) = L-histidine(in) + L-arginine(out). It carries out the reaction L-arginine(in) + L-phenylalanine(out) = L-arginine(out) + L-phenylalanine(in). It catalyses the reaction L-cysteine(out) + L-arginine(in) = L-cysteine(in) + L-arginine(out). The catalysed reaction is L-cystine(out) + L-arginine(in) = L-cystine(in) + L-arginine(out). The enzyme catalyses L-lysine(out) + L-arginine(in) = L-lysine(in) + L-arginine(out). Its function is as follows. Associates with SLC3A1 to form a functional transporter complex that mediates the electrogenic exchange between cationic amino acids and neutral amino acids, with a stoichiometry of 1:1. Has system b(0,+)-like activity with high affinity for extracellular cationic amino acids and L-cystine and lower affinity for intracellular neutral amino acids. Substrate exchange is driven by high concentration of intracellular neutral amino acids and the intracellular reduction of L-cystine to L-cysteine. Required for reabsorption of L-cystine and dibasic amino acids across the brush border membrane in renal proximal tubules. The polypeptide is b(0,+)-type amino acid transporter 1 (Homo sapiens (Human)).